A 161-amino-acid chain; its full sequence is Suppressor of kinetochore protein 1 (161 aa).

The segment at 102–161 (VLASNYLDIKPLLDTGCKTVANMIRGKSPEDIRKTFNIPNDFTPEEEEQIRKENEWAEDR) is interaction with the F-box domain of F-box proteins.

The protein belongs to the SKP1 family. Essential component of the E3 ubiquitin ligase Skp1-Cullin-1-F-box (SCF) complex. Interacts with cul1, fbh1, mcs2, pip1, pof1, pof2, pof3, pof4, pof5, pof6, pof7, pof8, pof9, pof10, pof11, pof12, pof13, pof14, pop1, pop2 and tfb3. Forms a complex with pof6 and sip1. Component of the RAVE complex composed of rav1, rav2 and skp1.

The protein localises to the cytoplasm. It localises to the nucleus. In terms of biological role, required for cig2 degradation in the G2 and M phases of the cell cycle. Together with pof6, essential for septum processing and cell separation. Involved in mitotic progression, essential for the execution of anaphase B; required for coordinated structural alterations of mitotic spindles and segregation of nuclear membrane structures at anaphase. Involved in the DNA damage checkpoint pathway and maintenance of genome integrity. Component of the RAVE complex which is required for stable assembly of the vacuolar ATPase complex V-ATPase. The sequence is that of Suppressor of kinetochore protein 1 from Schizosaccharomyces pombe (strain 972 / ATCC 24843) (Fission yeast).